Here is a 366-residue protein sequence, read N- to C-terminus: NADH-quinone oxidoreductase subunit D (366 aa).

This sequence belongs to the complex I 49 kDa subunit family. In terms of assembly, NDH-1 is composed of 14 different subunits. Subunits NuoB, C, D, E, F, and G constitute the peripheral sector of the complex.

The protein localises to the cell membrane. It catalyses the reaction a quinone + NADH + 5 H(+)(in) = a quinol + NAD(+) + 4 H(+)(out). Its function is as follows. NDH-1 shuttles electrons from NADH, via FMN and iron-sulfur (Fe-S) centers, to quinones in the respiratory chain. The immediate electron acceptor for the enzyme in this species is believed to be a menaquinone. Couples the redox reaction to proton translocation (for every two electrons transferred, four hydrogen ions are translocated across the cytoplasmic membrane), and thus conserves the redox energy in a proton gradient. This Bacillus cereus (strain ZK / E33L) protein is NADH-quinone oxidoreductase subunit D.